We begin with the raw amino-acid sequence, 207 residues long: Putative 3-methyladenine DNA glycosylase (207 aa).

Belongs to the DNA glycosylase MPG family.

The polypeptide is Putative 3-methyladenine DNA glycosylase (Koribacter versatilis (strain Ellin345)).